Reading from the N-terminus, the 654-residue chain is MQKKIKKRLKKENLLRIFSKTLAFLFLVLFISFFVFLLTEATKIGPDFAKSLFNLEFNLGNKQAGIWFPLLVSFIVSIGALIIASYIGVRTSFFLVYRCKPKIRKKLSLIIDILSGIPSVIFGLFASQILSIFFRDILKLPPLSLLNVIAMLSFMIIPIVISLTTNTLTYVNNDLISVVVSLGENKTSAIYKIIKKEIKPQLTVILTLAFARAISETMAVNFVLQSVNYQEVINNNRFFTSDLKTLGSVISTFIFSENGDEQINGVLYIFGIIILILVSLLNFFAIWSANPKTLERYPFLKKISNFIYQVVWFIPNNISALFVDLTSTRQSVKKIKVNNINERSLFFKERLQSVVWIKLNYFLKIFQELICTFLAFGFVLAILLFVFINGSVAINNNGSTVFSFEADSTGRALVNTLVIILITITITFPLALLIAIWLNEYNNSKVVKNVFNFVIDSLSSMPSIIYGLFGLSFFLRVLQLSAGGANGTSLIAGILTISVVILLFLIRTCQQALNNVSWDLRISAFALGISKREVIFKIVLPSALKGLIVALILSINRIIAETAPFFITSGLSSSNLFHLSLPGQTLTTRIYGQLFSINSNAISVMLETSLVSVVFLILLIFFSSYLIPSLFLLNKQKWLVIKSKFQSFKLWKRT.

A run of 12 helical transmembrane segments spans residues 22 to 42 (LAFL…TEAT), 64 to 84 (AGIW…LIIA), 113 to 133 (ILSG…LSIF), 143 to 163 (LSLL…VISL), 266 to 286 (VLYI…FFAI), 303 to 323 (ISNF…ALFV), 368 to 388 (ELIC…FVFI), 417 to 437 (LVII…IAIW), 453 to 473 (FVID…GLSF), 486 to 506 (NGTS…LFLI), 535 to 555 (IFKI…ILSI), and 613 to 633 (VVFL…LFLL). The 216-residue stretch at 70–285 (LLVSFIVSIG…ILVSLLNFFA (216 aa)) folds into the ABC transmembrane type-1 1 domain. The ABC transmembrane type-1 2 domain occupies 413–623 (LVNTLVIILI…VFLILLIFFS (211 aa)).

The protein belongs to the binding-protein-dependent transport system permease family. CysTW subfamily.

The protein resides in the cell membrane. Functionally, could be part of a binding-protein-dependent transport system for phosphate; probably responsible for the translocation of the substrate across the membrane. The sequence is that of Phosphate transport system permease protein PstA homolog (pstA) from Mycoplasma genitalium (strain ATCC 33530 / DSM 19775 / NCTC 10195 / G37) (Mycoplasmoides genitalium).